A 31-amino-acid polypeptide reads, in one-letter code: Cytochrome b6-f complex subunit 6 (31 aa).

A helical transmembrane segment spans residues 4–24 (ITSYFGFLLAALTITSALFIG).

This sequence belongs to the PetL family. As to quaternary structure, the 4 large subunits of the cytochrome b6-f complex are cytochrome b6, subunit IV (17 kDa polypeptide, PetD), cytochrome f and the Rieske protein, while the 4 small subunits are PetG, PetL, PetM and PetN. The complex functions as a dimer.

The protein resides in the plastid. Its subcellular location is the chloroplast thylakoid membrane. Functionally, component of the cytochrome b6-f complex, which mediates electron transfer between photosystem II (PSII) and photosystem I (PSI), cyclic electron flow around PSI, and state transitions. PetL is important for photoautotrophic growth as well as for electron transfer efficiency and stability of the cytochrome b6-f complex. This Solanum tuberosum (Potato) protein is Cytochrome b6-f complex subunit 6.